The sequence spans 97 residues: Large ribosomal subunit protein uL23 (97 aa).

The protein belongs to the universal ribosomal protein uL23 family. In terms of assembly, part of the 50S ribosomal subunit. Contacts protein L29, and trigger factor when it is bound to the ribosome.

Functionally, one of the early assembly proteins it binds 23S rRNA. One of the proteins that surrounds the polypeptide exit tunnel on the outside of the ribosome. Forms the main docking site for trigger factor binding to the ribosome. This chain is Large ribosomal subunit protein uL23, found in Brucella suis (strain ATCC 23445 / NCTC 10510).